The following is a 309-amino-acid chain: Tagatose-6-phosphate kinase (309 aa).

It belongs to the carbohydrate kinase PfkB family. LacC subfamily.

The catalysed reaction is D-tagatofuranose 6-phosphate + ATP = D-tagatofuranose 1,6-bisphosphate + ADP + H(+). Its pathway is carbohydrate metabolism; D-tagatose 6-phosphate degradation; D-glyceraldehyde 3-phosphate and glycerone phosphate from D-tagatose 6-phosphate: step 1/2. In Streptococcus pneumoniae serotype 4 (strain ATCC BAA-334 / TIGR4), this protein is Tagatose-6-phosphate kinase.